Reading from the N-terminus, the 243-residue chain is Membrane selenoprotein (243 aa).

A disordered region spans residues 12–63; that stretch reads GEDCEGGVUARPSSSSSSINNASDESTPLISKTNDEEKANIGISSTSNSPQE. A non-standard amino acid (selenocysteine) is located at residue Sec-20. Polar residues-rich tracts occupy residues 30-43 and 53-63; these read INNASDESTPLISK and GISSTSNSPQE. A run of 4 helical transmembrane segments spans residues 74 to 94, 102 to 122, 144 to 164, and 199 to 219; these read ILTLLISIPALVGSUCWPVLI, VSAGSVELAHSLTFAITLSIL, IKFGPFYLTAIAVPLATFDIL, and VMGWFSAIVFTYTGYACLLVG. A non-standard amino acid (selenocysteine) is located at residue Sec-88.

It localises to the membrane. The protein is Membrane selenoprotein (msp) of Dictyostelium discoideum (Social amoeba).